A 687-amino-acid chain; its full sequence is Dictomallein (687 aa).

Disordered stretches follow at residues 1 to 45 and 73 to 112; these read MGNG…SRRL and TAGG…STSA. In terms of domain architecture, Peptidase M66 spans 233–501; the sequence is PVFGTDADVQ…QAWIASRVLA (269 aa). Residue His393 participates in Zn(2+) binding. Glu394 is an active-site residue. The Zn(2+) site is built by His397 and His403.

Belongs to the dictomallein family. The cofactor is Zn(2+).

The protein is Dictomallein (dtmL) of Burkholderia mallei (strain NCTC 10247).